The chain runs to 3373 residues: Intermembrane lipid transfer protein vps13A (3373 aa).

A Chorein N-terminal domain is found at 3–119 (FEGLVSDVLS…QAELKKKKLE (117 aa)). Disordered regions lie at residues 818–858 (PKAT…VNSS), 1028–1096 (VPIN…KTAS), 1259–1304 (NNNK…DLEK), 1648–1729 (DPSI…EEEK), and 1872–1913 (QKKR…GKKD). Residues 823 to 839 (TPINDSNSPSSVSPKLI) are compositionally biased toward polar residues. Composition is skewed to low complexity over residues 840–858 (STSPHSFSSSSAPVDVNSS) and 1048–1066 (SSPNQQSPNQQSPNQQSPQ). Composition is skewed to basic and acidic residues over residues 1263-1274 (SIEKSKSIDSKL) and 1288-1304 (RSDDNHEKSERELDLEK). Composition is skewed to low complexity over residues 1659 to 1685 (QQQQQQSSSSSFIPSQQQQQQKVRSQS), 1695 to 1716 (SSIGGKESKTISSSISNNSLSS), and 1884 to 1898 (SSSTSLPSLNKSTNS). A compositionally biased stretch (polar residues) spans 1899-1909 (FQTSTSGNSNS). Positions 2405-2706 (TLSFYCQYWL…CYGWDEPSAE (302 aa)) constitute an SHR-BD domain. Residues 2909–2933 (RGNNASNNNNNNGMTSSQMRQSGSG) form a disordered region. Residues 2911–2920 (NNASNNNNNN) show a composition bias toward low complexity.

It belongs to the VPS13 family.

It is found in the membrane. Its function is as follows. Mediates the transfer of lipids between membranes at organelle contact sites. This is Intermembrane lipid transfer protein vps13A (vps13A) from Dictyostelium discoideum (Social amoeba).